Reading from the N-terminus, the 1123-residue chain is Nicotinic receptor-associated protein 4 (1123 aa).

The signal sequence occupies residues 1–18; the sequence is MGSLPLILLSLLLPGALA. The Lumenal portion of the chain corresponds to 19-1071; that stretch reads NVYSCAGSVK…TSSKRANDVD (1053 aa). Residues 1072–1092 traverse the membrane as a helical segment; sequence ISVGTFLSLPFFVTLALVFFN. Topologically, residues 1093 to 1123 are cytoplasmic; that stretch reads QNRVLELLGTFIDWARNTFAPTADNHHRKRK.

As to quaternary structure, may interact with nra-2 in the ER. Expressed in body wall, pharyngeal, uterine and vulval muscles, motor neurons, nerve ring, motor and ventral cord neurons, hypodermal cells in the tail, vulval epithelium and intestine.

The protein localises to the endoplasmic reticulum membrane. Functionally, involved in the recognition and selection of protein complexes to exit the endoplasmic reticulum (ER). In muscles, regulates levamisole-sensitive nicotinic acetylcholine receptor (L-AChR) subunit composition, possibly by allowing only specific L-AChR subunit combinations to exit the ER. Specifically, may promote the inclusion of alpha subunit unc-38 into and the exclusion of unc-29 from L-AChR. Regulates L-AChR sensitivity to agonists such as nicotine and levamisole at neuro-muscular junctions. This is Nicotinic receptor-associated protein 4 from Caenorhabditis elegans.